A 340-amino-acid chain; its full sequence is Leucine-rich repeat-containing protein 23 (340 aa).

Over residues 1–27 (MSDEDDVDDVDAEQDEVESDKEIEEWE) the composition is skewed to acidic residues. Positions 1–38 (MSDEDDVDDVDAEQDEVESDKEIEEWEDYRKETEEASE) are disordered. 6 LRR repeats span residues 89–110 (HLRY…NSLT), 111–134 (HLLW…PYLQ), 177–197 (SLHT…IYLP), 198–219 (KLKN…ENLS), 220–241 (NLTT…SQEM), and 243–264 (SLQY…AKLR). The segment at 205-340 (AQNLLKKVEG…QDMEPYLPPV (136 aa)) is interaction with RSPH9. The LRRCT domain maps to 277–315 (NPCADETDYRQEALVQMAHLERLDKEFYEDDDRAEAEEI). Residues 305 to 328 (EDDDRAEAEEIRQRLKEEQDQDLD) adopt a coiled-coil conformation. The interval 317–340 (QRLKEEQDQDLDPDQDMEPYLPPV) is disordered. The span at 323–333 (QDQDLDPDQDM) shows a compositional bias: acidic residues.

Component of the axonemal radial spoke complex. Interacts with RSPH3A and RSPH3B. Interacts with RSPH9. As to expression, expressed in the testis (at protein level).

Its subcellular location is the cytoplasm. It localises to the cytoskeleton. The protein resides in the flagellum axoneme. Essential for sperm motility and male fertility. Plays an important role in the proper assembly of the third radial spoke (RS3) head and the bridge structure between RS2 and RS3 in the sperm flagella. The sequence is that of Leucine-rich repeat-containing protein 23 (Lrrc23) from Mus musculus (Mouse).